A 134-amino-acid chain; its full sequence is Small ribosomal subunit protein bS16 (134 aa).

A disordered region spans residues 79 to 134 (AGIAKRPSRNNPTKGEPGKKAQERLALAKQAEEEASAKAAEAAAAAAAPAEEAASE). Residues 115-134 (AKAAEAAAAAAAPAEEAASE) show a composition bias toward low complexity.

It belongs to the bacterial ribosomal protein bS16 family.

The polypeptide is Small ribosomal subunit protein bS16 (Brucella abortus (strain S19)).